Here is a 220-residue protein sequence, read N- to C-terminus: Octanoyltransferase (220 aa).

Residues 34-209 (ENSQDEIWVV…TLSQELGLAN (176 aa)) form the BPL/LPL catalytic domain. Substrate is bound by residues 73–80 (RGGQVTYH), 140–142 (SLG), and 153–155 (GLA). The Acyl-thioester intermediate role is filled by Cys-171.

It belongs to the LipB family.

It localises to the cytoplasm. It catalyses the reaction octanoyl-[ACP] + L-lysyl-[protein] = N(6)-octanoyl-L-lysyl-[protein] + holo-[ACP] + H(+). It participates in protein modification; protein lipoylation via endogenous pathway; protein N(6)-(lipoyl)lysine from octanoyl-[acyl-carrier-protein]: step 1/2. Catalyzes the transfer of endogenously produced octanoic acid from octanoyl-acyl-carrier-protein onto the lipoyl domains of lipoate-dependent enzymes. Lipoyl-ACP can also act as a substrate although octanoyl-ACP is likely to be the physiological substrate. In Shewanella piezotolerans (strain WP3 / JCM 13877), this protein is Octanoyltransferase.